We begin with the raw amino-acid sequence, 300 residues long: Porphobilinogen deaminase (300 aa).

The residue at position 239 (cysteine 239) is an S-(dipyrrolylmethanemethyl)cysteine.

It belongs to the HMBS family. Monomer. Requires dipyrromethane as cofactor.

The catalysed reaction is 4 porphobilinogen + H2O = hydroxymethylbilane + 4 NH4(+). The protein operates within porphyrin-containing compound metabolism; protoporphyrin-IX biosynthesis; coproporphyrinogen-III from 5-aminolevulinate: step 2/4. Its function is as follows. Tetrapolymerization of the monopyrrole PBG into the hydroxymethylbilane pre-uroporphyrinogen in several discrete steps. In Francisella tularensis subsp. tularensis (strain FSC 198), this protein is Porphobilinogen deaminase.